A 383-amino-acid chain; its full sequence is Succinyl-diaminopimelate desuccinylase (383 aa).

His-69 is a Zn(2+) binding site. Asp-71 is an active-site residue. Asp-103 lines the Zn(2+) pocket. Glu-137 serves as the catalytic Proton acceptor. 3 residues coordinate Zn(2+): Glu-138, Glu-166, and His-357.

It belongs to the peptidase M20A family. DapE subfamily. As to quaternary structure, homodimer. The cofactor is Zn(2+). Co(2+) serves as cofactor.

It carries out the reaction N-succinyl-(2S,6S)-2,6-diaminopimelate + H2O = (2S,6S)-2,6-diaminopimelate + succinate. It participates in amino-acid biosynthesis; L-lysine biosynthesis via DAP pathway; LL-2,6-diaminopimelate from (S)-tetrahydrodipicolinate (succinylase route): step 3/3. Its function is as follows. Catalyzes the hydrolysis of N-succinyl-L,L-diaminopimelic acid (SDAP), forming succinate and LL-2,6-diaminopimelate (DAP), an intermediate involved in the bacterial biosynthesis of lysine and meso-diaminopimelic acid, an essential component of bacterial cell walls. This Rickettsia typhi (strain ATCC VR-144 / Wilmington) protein is Succinyl-diaminopimelate desuccinylase.